The primary structure comprises 322 residues: Picrinine-N-methytransferase (322 aa).

Residues 103 to 112 (MLDVGCGLGG) are SAM motif I. Positions 166 to 174 (GTFDLVFTI) are SAM motif II. Residues 193–202 (VAAPGAPVVI) form an SAM motif III region.

It belongs to the class I-like SAM-binding methyltransferase superfamily. gTMT family. As to quaternary structure, homodimer. As to expression, accumulates in tissues actively synthesizing monoterpenoid indole alkaloids (MIAs) (at protein level). Mainly expressed in young leaves, but barely in roots and stems.

Its subcellular location is the cytoplasm. The protein localises to the cytosol. It carries out the reaction picrinine + S-adenosyl-L-methionine = ervincine + S-adenosyl-L-homocysteine + H(+). It participates in alkaloid biosynthesis; vindoline biosynthesis. In terms of biological role, S-adenosyl-L-methionine-dependent N-methyltransferase involved in the biosynthesis of biologically active monoterpenoid indole alkaloids (MIAs) natural products including vindoline. Catalyzes the conversion of picrinine to N-methylpicrinine (ervincine). Also accepts, with low efficiency, 21-hydroxycyclolochnericine and norajmaline as substrates. The polypeptide is Picrinine-N-methytransferase (Vinca minor (Common periwinkle)).